Reading from the N-terminus, the 641-residue chain is MLSGIEAAAGEYEDSELRCRVAVEELSPGGQPRRRQALRTAELSLGRNERRELMLRLQAPGPAGRPRCFPLRAARLFTRFAEAGRSTLRLPAHDTPGAGAVQLLLSDCPPDRLRRFLRTLRLKLAAAPGPGPASARAQLLGPRPRDFVTISPVQPEERRLRAATRVPDTTLVKRPVEPQAGAEPSTEAPRWPLPVKRLSLPSTKPQLSEEQAAVLRAVLKGQSIFFTGSAGTGKSYLLKRILGSLPPTGTVATASTGVAACHIGGTTLHAFAGIGSGQAPLAQCVALAQRPGVRQGWLNCQRLVIDEISMVEADLFDKLEAVARAVRQQNKPFGGIQLIICGDFLQLPPVTKGSQPPRFCFQSKSWKRCVPVTLELTKVWRQADQTFISLLQAVRLGRCSDEVTRQLQATASHKVGRDGIVATRLCTHQDDVALTNERRLQELPGKVHRFEAMDSNPELASTLDAQCPVSQLLQLKLGAQVMLVKNLSVSRGLVNGARGVVVGFEAEGRGLPQVRFLCGVTEVIHADRWTVQATGGQLLSRQQLPLQLAWAMSIHKSQGMTLDCVEISLGRVFASGQAYVALSRARSLQGLRVLDFDPMAVRCDPRVLHFYATLRRGRSLSLESPDDDEAASDQENMDPIL.

The PINT stretch occupies residues 1-180 (MLSGIEAAAG…LVKRPVEPQA (180 aa)). 2 positions are modified to phosphoserine: Ser27 and Ser151. A hydrolyzes ATP in the presence of both magnesium and single-stranded DNA; weak activity in the presence of RNA or double-stranded DNA; No unwinding activity region spans residues 167–641 (PDTTLVKRPV…SDQENMDPIL (475 aa)). The segment at 173–192 (KRPVEPQAGAEPSTEAPRWP) is disordered. 228–235 (GSAGTGKS) lines the ATP pocket. The DNA-binding element occupies 577 to 596 (QAYVALSRARSLQGLRVLDF). The disordered stretch occupies residues 622 to 641 (LESPDDDEAASDQENMDPIL). Positions 624-641 (SPDDDEAASDQENMDPIL) are enriched in acidic residues.

Belongs to the helicase family. PIF1 subfamily. In terms of assembly, monomer. Interacts with telomerase. Mg(2+) is required as a cofactor. Weak ubiquitous expression.

It is found in the nucleus. Its subcellular location is the mitochondrion. It catalyses the reaction Couples ATP hydrolysis with the unwinding of duplex DNA at the replication fork by translocating in the 5'-3' direction. This creates two antiparallel DNA single strands (ssDNA). The leading ssDNA polymer is the template for DNA polymerase III holoenzyme which synthesizes a continuous strand.. It carries out the reaction ATP + H2O = ADP + phosphate + H(+). Functionally, DNA-dependent ATPase and 5'-3' DNA helicase required for the maintenance of both mitochondrial and nuclear genome stability. Efficiently unwinds G-quadruplex (G4) DNA structures and forked RNA-DNA hybrids. Resolves G4 structures, preventing replication pausing and double-strand breaks (DSBs) at G4 motifs. Involved in the maintenance of telomeric DNA. Inhibits telomere elongation, de novo telomere formation and telomere addition to DSBs via catalytic inhibition of telomerase. Reduces the processivity of telomerase by displacing active telomerase from DNA ends. Releases telomerase by unwinding the short telomerase RNA/telomeric DNA hybrid that is the intermediate in the telomerase reaction. Possesses an intrinsic strand annealing activity. The protein is ATP-dependent DNA helicase PIF1 of Homo sapiens (Human).